We begin with the raw amino-acid sequence, 86 residues long: uncharacterized protein (86 aa).

Residues 4-24 (LFFTLIAFVAIILLMSIGFII) form a helical membrane-spanning segment.

It is found in the membrane. This is an uncharacterized protein from Haemophilus influenzae (strain ATCC 51907 / DSM 11121 / KW20 / Rd).